Here is a 753-residue protein sequence, read N- to C-terminus: 5-methyltetrahydropteroyltriglutamate--homocysteine methyltransferase (753 aa).

Residues 19–22 and Arg113 each bind 5-methyltetrahydropteroyltri-L-glutamate; that span reads RELK. Residues 430-432 and Glu483 each bind L-homocysteine; that span reads IGS. Residues 430–432 and Glu483 contribute to the L-methionine site; that span reads IGS. 5-methyltetrahydropteroyltri-L-glutamate is bound by residues 514–515 and Trp560; that span reads RC. Asp598 contributes to the L-homocysteine binding site. Asp598 is a binding site for L-methionine. Glu604 contacts 5-methyltetrahydropteroyltri-L-glutamate. Zn(2+)-binding residues include His640, Cys642, and Glu664. The active-site Proton donor is His693. Residue Cys725 coordinates Zn(2+).

This sequence belongs to the vitamin-B12 independent methionine synthase family. Zn(2+) is required as a cofactor.

The catalysed reaction is 5-methyltetrahydropteroyltri-L-glutamate + L-homocysteine = tetrahydropteroyltri-L-glutamate + L-methionine. It functions in the pathway amino-acid biosynthesis; L-methionine biosynthesis via de novo pathway; L-methionine from L-homocysteine (MetE route): step 1/1. Its function is as follows. Catalyzes the transfer of a methyl group from 5-methyltetrahydrofolate to homocysteine resulting in methionine formation. This is 5-methyltetrahydropteroyltriglutamate--homocysteine methyltransferase from Rhodococcus jostii (strain RHA1).